The following is a 58-amino-acid chain: Large ribosomal subunit protein bL32 (58 aa).

It belongs to the bacterial ribosomal protein bL32 family.

This Limosilactobacillus fermentum (strain NBRC 3956 / LMG 18251) (Lactobacillus fermentum) protein is Large ribosomal subunit protein bL32.